Here is a 684-residue protein sequence, read N- to C-terminus: Dipeptidyl-peptidase 5 (684 aa).

The first 24 residues, 1–24, serve as a signal peptide directing secretion; the sequence is MNKKIFSMMAASIIGSAAMTPSAG. WD repeat units follow at residues 87–127, 220–259, and 323–363; these read DTES…TERR, KPWSGIEDFSWSPDGQNIAYASRKKTGMAYSLSTNSDIYI, and TFDY…GKIR. Catalysis depends on charge relay system residues Ser542, Asp627, and His659.

It belongs to the peptidase S9C family. In terms of assembly, homodimer.

The protein resides in the periplasm. Its function is as follows. Catalyzes the removal of dipeptides from the N-terminus of oligopeptides. Prefers Ala and hydrophobic residues except Pro at the P1 position, and has no preference for P2 residues. Shows high dipeptidyl peptidase activity toward the synthetic substrates Lys-Ala-, Gly-Phe-, Met-Leu-, and Ser-Tyr-methylcoumaryl-7-amide (MCA), and slowly hydrolyzes Val-Tyr-MCA. Is likely involved in amino acid metabolism and bacterial growth of asaccharolytic P.gingivalis, that utilizes amino acids from extracellular proteinaceous nutrients as energy and carbon sources. The protein is Dipeptidyl-peptidase 5 of Porphyromonas gingivalis (strain ATCC 33277 / DSM 20709 / CIP 103683 / JCM 12257 / NCTC 11834 / 2561).